We begin with the raw amino-acid sequence, 335 residues long: Ribosomal RNA large subunit methyltransferase F (335 aa).

This sequence belongs to the methyltransferase superfamily. METTL16/RlmF family.

It localises to the cytoplasm. It carries out the reaction adenosine(1618) in 23S rRNA + S-adenosyl-L-methionine = N(6)-methyladenosine(1618) in 23S rRNA + S-adenosyl-L-homocysteine + H(+). Its function is as follows. Specifically methylates the adenine in position 1618 of 23S rRNA. In Yersinia enterocolitica serotype O:8 / biotype 1B (strain NCTC 13174 / 8081), this protein is Ribosomal RNA large subunit methyltransferase F.